The chain runs to 1216 residues: MKLIPFLSEEEIQKLQEAEANSSKEQKKTAEQIEAIYTSAQNILVSASAGSGKTFVMAERILDQLARGVEISQLFISTFTVKAATELKERLEKKISKKIQETDDVDLKQHLGRQLADLPNAAIGTMDSFTQKFLGKHGYLLDIAPNFRILQNQSEQLILENEVFHEVFEAHYQGKQKETFSHLLKNFAGRGKDERGLRQQVYKIYDFLQSTSNPQKWLSESFLKGFEKADFTSEKEKLTEQIKQALWDLESFFRYHLDNDAKEFAKAAYLENVQLILDEIGSLNQESDSQAYQAVLARVVAISKEKNGRALTNASRKADLKPLADAYNEERKTQFAKLGQLSDQIAILDYQERYHGDTWKLAKTFQSFMSDFVEAYRQRKRQENAFEFADISHYTIEILENFPQVRESYQERFHEVMVDEYQDTNHIQERMLELLSNGHNRFMVGDIKQSIYRFRQADPQIFNEKFQRYAQNPQEGRLIILKENFRSSSEVLSATNDVFERLMDQEVGEINYDNKHQLVFANTKLTPNPDNKAAFLLYDKDDTGEEEESQTETKLTGEMRLVIKEILKLHQEKGVAFKEIALLTSSRSRNDQILLALSEYGIPVKTDGEQNNYLQSLEVQVMLDTLRVIHNPLQDYALVALMKSPMFGFDEDELARLSLQKAEDKVHENLYEKLVNAQKMASSQKGLIHTALAEKLKQFMDILASWRLYAKTHSLYDLIWKIYNDRFYYDYVGALPNGPARQANLYALALRADQFEKSNFKGLSRFIRMIDQVLEAQHDLASVAVAPPKDAVELMTIHKSKGLEFPYVFILNMDQDFNKQDSMSEVILSRQNGLGVKYIAKMETGAVEDHYPKTIKLSIPSLTYRQNEEELQLASYSEQMRLLYVAMTRAEKKLYLVGKGSREKLESKEYPAAKNGKLNSNTRLQARNFQDWLWAISKVFTKDKLNFSYRFIGEDQLTREAIGELETKSPLQDSSQADNRQSDTIKEALEMLKEVEVYNTLHRAAIELPSVQTPSQIKKFYEPVMDMEGVEIAGQGQSVGKKISFDLPDFSTKEKVTGAEIGSATHELMQRIDLSQQLTLASLTETLKQVQTSQAVRDKINLDKILAFFDTVLGQEILANTDHLYREQPFSMLKRDQKSQEDFVVRGILDGYLLYENKIVLFDYKTDRYDEPSQLVDRYRGQLALYEEALSRAYSIENIEKYLILLGKDEVQVVKV.

The UvrD-like helicase ATP-binding domain maps to 26–488 (QKKTAEQIEA…IILKENFRSS (463 aa)). An ATP-binding site is contributed by 47–54 (ASAGSGKT). The region spanning 515-802 (KHQLVFANTK…ELMTIHKSKG (288 aa)) is the UvrD-like helicase C-terminal domain.

The protein belongs to the helicase family. AddA subfamily. In terms of assembly, heterodimer of AddA and AddB/RexB. The cofactor is Mg(2+).

The catalysed reaction is Couples ATP hydrolysis with the unwinding of duplex DNA by translocating in the 3'-5' direction.. The enzyme catalyses ATP + H2O = ADP + phosphate + H(+). Its function is as follows. The heterodimer acts as both an ATP-dependent DNA helicase and an ATP-dependent, dual-direction single-stranded exonuclease. Recognizes the chi site generating a DNA molecule suitable for the initiation of homologous recombination. The AddA nuclease domain is required for chi fragment generation; this subunit has the helicase and 3' -&gt; 5' nuclease activities. The chain is ATP-dependent helicase/nuclease subunit A from Streptococcus pneumoniae serotype 2 (strain D39 / NCTC 7466).